Reading from the N-terminus, the 320-residue chain is Malate dehydrogenase (320 aa).

NAD(+) contacts are provided by residues 10-15 (GAGQIG) and Asp34. Arg83 and Arg89 together coordinate substrate. NAD(+) contacts are provided by residues Asn96 and 119 to 121 (ITN). 2 residues coordinate substrate: Asn121 and Arg152. His176 (proton acceptor) is an active-site residue.

Belongs to the LDH/MDH superfamily. MDH type 3 family.

It carries out the reaction (S)-malate + NAD(+) = oxaloacetate + NADH + H(+). Its function is as follows. Catalyzes the reversible oxidation of malate to oxaloacetate. In Methylobacterium nodulans (strain LMG 21967 / CNCM I-2342 / ORS 2060), this protein is Malate dehydrogenase.